Reading from the N-terminus, the 259-residue chain is 3-methyl-2-oxobutanoate hydroxymethyltransferase (259 aa).

Mg(2+) contacts are provided by Asp44 and Asp83. 3-methyl-2-oxobutanoate contacts are provided by residues 44-45 (DS), Asp83, and Lys112. Mg(2+) is bound at residue Glu114. Residue Glu177 is the Proton acceptor of the active site.

The protein belongs to the PanB family. Homodecamer; pentamer of dimers. Mg(2+) serves as cofactor.

Its subcellular location is the cytoplasm. It catalyses the reaction 3-methyl-2-oxobutanoate + (6R)-5,10-methylene-5,6,7,8-tetrahydrofolate + H2O = 2-dehydropantoate + (6S)-5,6,7,8-tetrahydrofolate. It functions in the pathway cofactor biosynthesis; (R)-pantothenate biosynthesis; (R)-pantoate from 3-methyl-2-oxobutanoate: step 1/2. Its function is as follows. Catalyzes the reversible reaction in which hydroxymethyl group from 5,10-methylenetetrahydrofolate is transferred onto alpha-ketoisovalerate to form ketopantoate. This chain is 3-methyl-2-oxobutanoate hydroxymethyltransferase, found in Nitratiruptor sp. (strain SB155-2).